A 248-amino-acid chain; its full sequence is Tetraspanin-17 (248 aa).

At 1-7 the chain is on the cytoplasmic side; that stretch reads MSEVRTG. Residues 8 to 28 traverse the membrane as a helical segment; the sequence is FLTMTTIILISIGLTMMGTGL. The Extracellular portion of the chain corresponds to 29 to 44; sequence YQKTTMSSCIRETSSQ. The chain crosses the membrane as a helical span at residues 45-65; that stretch reads FTLLGLLLLLIPQIGLYGICC. At 66-69 the chain is on the cytoplasmic side; sequence RSKR. Residues 70-90 traverse the membrane as a helical segment; it reads LFNFFFYGMVVLIIIVSYYSI. The Extracellular portion of the chain corresponds to 91–210; it reads KCSIYNTTFG…ILKAIVHQWK (120 aa). 3 N-linked (GlcNAc...) asparagine glycosylation sites follow: N96, N109, and N141. Residues 211–231 traverse the membrane as a helical segment; it reads YLSMFAYPALVLSCISLAIAW. Residues 232–248 lie on the Cytoplasmic side of the membrane; sequence SLKETIHENEDYRGSYS.

Belongs to the tetraspanin (TM4SF) family.

It localises to the membrane. Its function is as follows. May be involved in the regulation of cell differentiation. This Arabidopsis thaliana (Mouse-ear cress) protein is Tetraspanin-17 (TET17).